The primary structure comprises 238 residues: MGEEFPTISLLGIDFNLSNILMITVTCVIVLLIAIICTRNLQRRPTGKQNFIEWIMDFVRGIINSNMDWKTGGRFHVLGITLLMFIFVANMLGLPFQIAINDEVWWRSPTADPIVTLTLAIMVLGLTHYYGIKMRGFKHYFVGTYFSPMKFLFPLKLVEEFANTLTLGLRLYGNIFAGEVLLTIIATQLAHMNIFVGVLAIIPALLWQGFSIFIGAIQAYIFTMLTMVYMSHKVSDEH.

Transmembrane regions (helical) follow at residues 17–37 (LSNI…AIIC), 80–100 (ITLL…QIAI), 112–132 (DPIV…YYGI), and 194–214 (IFVG…SIFI).

This sequence belongs to the ATPase A chain family. In terms of assembly, F-type ATPases have 2 components, CF(1) - the catalytic core - and CF(0) - the membrane proton channel. CF(1) has five subunits: alpha(3), beta(3), gamma(1), delta(1), epsilon(1). CF(0) has three main subunits: a(1), b(2) and c(9-12). The alpha and beta chains form an alternating ring which encloses part of the gamma chain. CF(1) is attached to CF(0) by a central stalk formed by the gamma and epsilon chains, while a peripheral stalk is formed by the delta and b chains.

Its subcellular location is the cell membrane. In terms of biological role, key component of the proton channel; it plays a direct role in the translocation of protons across the membrane. The chain is ATP synthase subunit a from Listeria welshimeri serovar 6b (strain ATCC 35897 / DSM 20650 / CCUG 15529 / CIP 8149 / NCTC 11857 / SLCC 5334 / V8).